Consider the following 617-residue polypeptide: Glutamyl-tRNA(Gln) amidotransferase subunit B, mitochondrial (617 aa).

Residues 1 to 56 constitute a mitochondrion transit peptide; the sequence is MPRIPTSVLGKYLLSGQISRQGCVGARQITRHSALPSAAVSVANSARLLHVSSETV. A disordered region spans residues 53-90; that stretch reads SETVPPPPAQPVPLRKQLKDEAKKAKKQGKKKSKGDSQ. A compositionally biased stretch (basic residues) spans 76–85; that stretch reads KAKKQGKKKS.

Belongs to the GatB/GatE family. GatB subfamily. Subunit of the heterotrimeric GatCAB amidotransferase (AdT) complex, composed of A, B and C subunits.

Its subcellular location is the mitochondrion. The catalysed reaction is L-glutamyl-tRNA(Gln) + L-glutamine + ATP + H2O = L-glutaminyl-tRNA(Gln) + L-glutamate + ADP + phosphate + H(+). Its function is as follows. Allows the formation of correctly charged Gln-tRNA(Gln) through the transamidation of misacylated Glu-tRNA(Gln) in the mitochondria. The reaction takes place in the presence of glutamine and ATP through an activated gamma-phospho-Glu-tRNA(Gln). This is Glutamyl-tRNA(Gln) amidotransferase subunit B, mitochondrial from Fusarium vanettenii (strain ATCC MYA-4622 / CBS 123669 / FGSC 9596 / NRRL 45880 / 77-13-4) (Fusarium solani subsp. pisi).